A 769-amino-acid polypeptide reads, in one-letter code: Sensor protein DivL (769 aa).

A helical membrane pass occupies residues leucine 6 to histidine 26. The Histidine kinase domain maps to asparagine 547–glutamine 758. Tyrosine 550 is subject to Phosphotyrosine; by autocatalysis.

Autophosphorylated.

It is found in the cell membrane. The enzyme catalyses ATP + protein L-histidine = ADP + protein N-phospho-L-histidine.. Functionally, required for cell division and growth. It catalyzes the phosphorylation of CtrA and activates transcription in vitro of the cell cycle-regulated fliF promoter. The protein is Sensor protein DivL (divL) of Caulobacter vibrioides (strain ATCC 19089 / CIP 103742 / CB 15) (Caulobacter crescentus).